Here is a 1072-residue protein sequence, read N- to C-terminus: DNA-directed RNA polymerase subunit beta (1072 aa).

It belongs to the RNA polymerase beta chain family. In terms of assembly, in plastids the minimal PEP RNA polymerase catalytic core is composed of four subunits: alpha, beta, beta', and beta''. When a (nuclear-encoded) sigma factor is associated with the core the holoenzyme is formed, which can initiate transcription.

The protein resides in the plastid. It is found in the chloroplast. The catalysed reaction is RNA(n) + a ribonucleoside 5'-triphosphate = RNA(n+1) + diphosphate. DNA-dependent RNA polymerase catalyzes the transcription of DNA into RNA using the four ribonucleoside triphosphates as substrates. This chain is DNA-directed RNA polymerase subunit beta, found in Lemna minor (Common duckweed).